Consider the following 389-residue polypeptide: MGKMAAAVGSVATLATEPGEDAFRKLFRFYRQSRPGTADLEGVIDFSAAHAARGKGPGAQKVIKSQLNVSSVSEQNAYRAGLQPVSKWQAYGLKGYPGFIFIPNPFLPGYQWHWVKQCLKLYSQKPNVCNLDKHMSKEETQDLWEQSKEFLRYKEATKRRPRSLLEKLRWVTVGYHYNWDSKKYSADHYTPFPSDLGFLSEQVAAACGFEDFRAEAGILNYYRLDSTLGIHVDRSELDHSKPLLSFSFGQSAIFLLGGLQRDEAPTAMFMHSGDIMIMSGFSRLLNHAVPRVLPNPEGEGLPHCLEAPLPAVLPRDSMVEPCSMEDWQVCASYLKTARVNMTVRQVLATDQNFPLEPIEDEKRDISTEGFCHLDDQNSEVKRARINPDS.

A tRNA-binding region spans residues 86–389 (SKWQAYGLKG…VKRARINPDS (304 aa)). Substrate-binding positions include W144 and 175 to 177 (YHY). The Fe2OG dioxygenase domain maps to 208-347 (GFEDFRAEAG…RVNMTVRQVL (140 aa)). Residue 220–222 (NYY) coordinates 2-oxoglutarate. Positions 231, 233, and 287 each coordinate Fe cation. D233 lines the substrate pocket. 338-344 (RVNMTVR) is a binding site for 2-oxoglutarate.

The protein belongs to the alkB family. As to quaternary structure, monomer. Interacts with DNAJB6. Requires Fe(2+) as cofactor. As to expression, ubiquitous.

Its subcellular location is the nucleus. It is found in the mitochondrion. It catalyses the reaction 2'-deoxyribonucleotide-(2'-deoxyribose 5'-phosphate)-2'-deoxyribonucleotide-DNA = a 3'-end 2'-deoxyribonucleotide-(2,3-dehydro-2,3-deoxyribose 5'-phosphate)-DNA + a 5'-end 5'-phospho-2'-deoxyribonucleoside-DNA + H(+). The enzyme catalyses a methylated nucleobase within DNA + 2-oxoglutarate + O2 = a nucleobase within DNA + formaldehyde + succinate + CO2. The catalysed reaction is an N(6)-methyl-2'-deoxyadenosine in DNA + 2-oxoglutarate + O2 = a 2'-deoxyadenosine in DNA + formaldehyde + succinate + CO2. It carries out the reaction an N(1)-methyladenosine in tRNA + 2-oxoglutarate + O2 = an adenosine in tRNA + formaldehyde + succinate + CO2. It catalyses the reaction 5-methylcytidine(34) in mitochondrial tRNA(Met) + 2 2-oxoglutarate + 2 O2 = 5-formylcytidine(34) in mitochondrial tRNA(Met) + 2 succinate + 2 CO2 + H2O. The enzyme catalyses an N(3)-methylcytidine in mRNA + 2-oxoglutarate + O2 = a cytidine in mRNA + formaldehyde + succinate + CO2. The catalysed reaction is N(1)-methyladenosine(58) in tRNA + 2-oxoglutarate + O2 = adenosine(58) in tRNA + formaldehyde + succinate + CO2. Dioxygenase that acts on nucleic acids, such as DNA and tRNA. Requires molecular oxygen, alpha-ketoglutarate and iron. A number of activities have been described for this dioxygenase, but recent results suggest that it mainly acts on tRNAs and mediates their demethylation or oxidation depending on the context and subcellular compartment. Mainly acts as a tRNA demethylase by removing N(1)-methyladenine from various tRNAs, with a preference for N(1)-methyladenine at position 58 (m1A58) present on a stem loop structure of tRNAs. Acts as a regulator of translation initiation and elongation in response to glucose deprivation: regulates both translation initiation, by mediating demethylation of tRNA(Met), and translation elongation, N(1)-methyladenine-containing tRNAs being preferentially recruited to polysomes to promote translation elongation. In mitochondrion, specifically interacts with mt-tRNA(Met) and mediates oxidation of mt-tRNA(Met) methylated at cytosine(34) to form 5-formylcytosine (f(5)c) at this position. mt-tRNA(Met) containing the f(5)c modification at the wobble position enables recognition of the AUA codon in addition to the AUG codon, expanding codon recognition in mitochondrial translation. Specifically demethylates DNA methylated on the 6th position of adenine (N(6)-methyladenosine) DNA. N(6)-methyladenosine (m6A) DNA is present at some L1 elements in embryonic stem cells and probably promotes their silencing. Demethylates mRNAs containing N(3)-methylcytidine modification. Also able to repair alkylated single-stranded DNA by oxidative demethylation, but with low activity. Also has DNA lyase activity and introduces double-stranded breaks at abasic sites: cleaves both single-stranded DNA and double-stranded DNA at abasic sites, with the greatest activity towards double-stranded DNA with two abasic sites. DNA lyase activity does not require alpha-ketoglutarate and iron and leads to the formation of an irreversible covalent protein-DNA adduct with the 5' DNA product. DNA lyase activity is not required during base excision repair and class switch recombination of the immunoglobulin heavy chain during B lymphocyte activation. May play a role in placental trophoblast lineage differentiation. The chain is Nucleic acid dioxygenase ALKBH1 from Homo sapiens (Human).